We begin with the raw amino-acid sequence, 235 residues long: Orotidine 5'-phosphate decarboxylase (235 aa).

Residues Asp-17, Lys-39, 66 to 75, Thr-121, Arg-182, Gln-191, and Arg-212 each bind substrate; that span reads DMKLLDIDHT. The active-site Proton donor is the Lys-68.

It belongs to the OMP decarboxylase family. Type 1 subfamily. As to quaternary structure, homodimer.

The catalysed reaction is orotidine 5'-phosphate + H(+) = UMP + CO2. It participates in pyrimidine metabolism; UMP biosynthesis via de novo pathway; UMP from orotate: step 2/2. Its function is as follows. Catalyzes the decarboxylation of orotidine 5'-monophosphate (OMP) to uridine 5'-monophosphate (UMP). The sequence is that of Orotidine 5'-phosphate decarboxylase from Bartonella bacilliformis.